The following is a 265-amino-acid chain: Cell division protein DivIB (265 aa).

The Cytoplasmic segment spans residues 1 to 33 (MRMELKMMGNVNKSNKTNEYILRRHKKKRKKKL). A helical transmembrane segment spans residues 34 to 54 (IIFSILLISILVTLCFKHPFF). One can recognise a POTRA domain in the interval 54–122 (FNVKIVEVKD…NKIVIHIKER (69 aa)). The Extracellular segment spans residues 55–265 (NVKIVEVKDN…FKGNPVVFIK (211 aa)).

Belongs to the FtsQ/DivIB family. DivIB subfamily.

The protein localises to the cell membrane. Functionally, cell division protein that may be involved in stabilizing or promoting the assembly of the division complex. The sequence is that of Cell division protein DivIB from Clostridium tetani (strain Massachusetts / E88).